A 541-amino-acid polypeptide reads, in one-letter code: Amino-acid permease 2 (541 aa).

A compositionally biased stretch (polar residues) spans Met-1–Gln-22. Residues Met-1–Gly-43 form a disordered region. A compositionally biased stretch (low complexity) spans Gly-23–Glu-41. The next 12 helical transmembrane spans lie at Phe-66–Gly-86, Gly-90–Ala-110, Val-139–Ala-159, Val-188–Ala-208, Thr-214–Val-234, Gly-255–Thr-275, Ala-301–Gly-321, Pro-347–Ile-367, Pro-399–Ala-419, Ile-424–Ile-444, Val-464–Pro-484, and Tyr-496–Gly-516.

Belongs to the amino acid-polyamine-organocation (APC) superfamily.

It localises to the membrane. The polypeptide is Amino-acid permease 2 (aap-2) (Neurospora crassa (strain ATCC 24698 / 74-OR23-1A / CBS 708.71 / DSM 1257 / FGSC 987)).